The primary structure comprises 396 residues: Elongation factor Tu 2 (396 aa).

Residues 10–206 (KLHVNVGTIG…ALDTFIPDPT (197 aa)) enclose the tr-type G domain. The segment at 19-26 (GHVDHGKT) is G1. Position 19-26 (19-26 (GHVDHGKT)) interacts with GTP. Thr26 is a binding site for Mg(2+). Residues 60-64 (GITIS) are G2. The interval 81 to 84 (DCPG) is G3. GTP contacts are provided by residues 81-85 (DCPGH) and 136-139 (NKAD). A G4 region spans residues 136 to 139 (NKAD). The G5 stretch occupies residues 174 to 176 (SAR).

It belongs to the TRAFAC class translation factor GTPase superfamily. Classic translation factor GTPase family. EF-Tu/EF-1A subfamily. Monomer.

The protein resides in the cytoplasm. It carries out the reaction GTP + H2O = GDP + phosphate + H(+). Functionally, GTP hydrolase that promotes the GTP-dependent binding of aminoacyl-tRNA to the A-site of ribosomes during protein biosynthesis. This chain is Elongation factor Tu 2, found in Xanthomonas campestris pv. campestris (strain 8004).